Consider the following 145-residue polypeptide: MPGVTVKDVNQQEFVRALAAFLKKSGKLKVPEWVDTVKLAKHKELAPYDENWFYTRAASTARHLYLRGGAGVGSMTKIYGGRQRNGVMPSHFSRGSKSVARRVLQALEGLKMVEKDQDGGRKLTPQGQRDLDRIAGQVAAANKKH.

Lysine 23 carries the post-translational modification N6-acetyllysine. The residue at position 67 (arginine 67) is an Omega-N-methylarginine. Residues lysine 111 and lysine 115 each carry the N6-acetyllysine modification. An N6-succinyllysine modification is found at lysine 143.

This sequence belongs to the eukaryotic ribosomal protein eS19 family. In terms of assembly, component of the small ribosomal subunit. Part of the small subunit (SSU) processome, composed of more than 70 proteins and the RNA chaperone small nucleolar RNA (snoRNA) U3. Interacts with RPS19BP1; the interaction is direct and mediates the integration of RPS19 in state post-A1. Interacts with RPS19BP1.

It is found in the cytoplasm. The protein localises to the nucleus. It localises to the nucleolus. Functionally, component of the small ribosomal subunit. The ribosome is a large ribonucleoprotein complex responsible for the synthesis of proteins in the cell. Required for pre-rRNA processing and maturation of 40S ribosomal subunits. Part of the small subunit (SSU) processome, first precursor of the small eukaryotic ribosomal subunit. During the assembly of the SSU processome in the nucleolus, many ribosome biogenesis factors, an RNA chaperone and ribosomal proteins associate with the nascent pre-rRNA and work in concert to generate RNA folding, modifications, rearrangements and cleavage as well as targeted degradation of pre-ribosomal RNA by the RNA exosome. This Pongo abelii (Sumatran orangutan) protein is Small ribosomal subunit protein eS19 (RPS19).